The following is a 408-amino-acid chain: Exo-alpha-sialidase ARB_03431 (408 aa).

A signal peptide spans 1–22 (MGIKQWLLSLVVVAISATATQA). The substrate site is built by Arg62, Arg81, Asp87, and Gln150. A glycan (N-linked (GlcNAc...) asparagine) is linked at Asn237. Residues Arg267, Arg324, 324-325 (RT), 333-334 (YD), Lys339, Tyr360, Asp378, and 378-380 (DWY) each bind substrate. Residue Asn398 is glycosylated (N-linked (GlcNAc...) asparagine).

The protein belongs to the glycosyl hydrolase 33 family.

The protein localises to the secreted. The catalysed reaction is Hydrolysis of alpha-(2-&gt;3)-, alpha-(2-&gt;6)-, alpha-(2-&gt;8)- glycosidic linkages of terminal sialic acid residues in oligosaccharides, glycoproteins, glycolipids, colominic acid and synthetic substrates.. Functionally, sialidase is able to release sialic acid from a wide variety of natural substrates. This is Exo-alpha-sialidase ARB_03431 from Arthroderma benhamiae (strain ATCC MYA-4681 / CBS 112371) (Trichophyton mentagrophytes).